The chain runs to 310 residues: GTPase Era (310 aa).

The Era-type G domain occupies 17 to 184 (RSGFVALIGA…MDYLAERLPE (168 aa)). Residues 25–32 (GATNAGKS) form a G1 region. 25–32 (GATNAGKS) lines the GTP pocket. The interval 51 to 55 (QTTRA) is G2. Residues 72–75 (DTPG) are G3. GTP contacts are provided by residues 72–76 (DTPGI) and 134–137 (NKVD). Positions 134–137 (NKVD) are G4. A G5 region spans residues 163-165 (ISA). Residues 215-292 (LHQELPYASH…HLFLFVKVRE (78 aa)) enclose the KH type-2 domain.

Belongs to the TRAFAC class TrmE-Era-EngA-EngB-Septin-like GTPase superfamily. Era GTPase family. In terms of assembly, monomer.

Its subcellular location is the cytoplasm. The protein localises to the cell inner membrane. An essential GTPase that binds both GDP and GTP, with rapid nucleotide exchange. Plays a role in 16S rRNA processing and 30S ribosomal subunit biogenesis and possibly also in cell cycle regulation and energy metabolism. The sequence is that of GTPase Era from Sinorhizobium medicae (strain WSM419) (Ensifer medicae).